The primary structure comprises 1197 residues: Protein timeless homolog (1197 aa).

A required for homodimerization and for interaction with CRY1 and CHEK1 region spans residues 1–309 (MDLYMMNCEL…GLHNLQNYSS (309 aa)). The residue at position 281 (Ser-281) is a Phosphoserine. 2 disordered regions span residues 647-674 (STPL…EELQ) and 943-1002 (RKKL…SAEN). Over residues 656–673 (PEEGDAEEEEEEEEEEEL) the composition is skewed to acidic residues. The tract at residues 810 to 949 (SHRAPLWSPE…KKRRKKLAPS (140 aa)) is DNA-binding domain. Residues 963–985 (QEDPEEEDEHLPEDESEDEESEE) are compositionally biased toward acidic residues. The span at 986 to 999 (GLPSGQGQGSSSLS) shows a compositional bias: low complexity. An interaction with PARP1 region spans residues 997-1095 (SLSAENLGES…TQLRRVAASL (99 aa)). Ser-1071 and Ser-1084 each carry phosphoserine. Residues 1079–1197 (IPAKLSSTQL…KRFQIEDEDD (119 aa)) form a required for nuclear localization region. Position 1086 is a phosphothreonine (Thr-1086). The segment at 1088–1197 (LRRVAASLSQ…KRFQIEDEDD (110 aa)) is disordered. 2 stretches are compositionally biased toward acidic residues: residues 1099-1109 (ENEEEREEEPE) and 1143-1153 (TEEEATGEEEW). A Phosphoserine modification is found at Ser-1165.

It belongs to the timeless family. Monomer. Homodimer or homomultimer. Component of the circadian core oscillator, which includes the CRY proteins, CLOCK or NPAS2, ARTNL/BMAL1 or ARTNL2/BMAL2, CSKN1D and/or CSNK1E, TIMELESS, and the PER proteins. Interacts directly with PER2; the interaction with PER2 is via its second PAS domain. Interacts directly with PER1 and PER3. Interacts with CRY1. Interacts with CRY2. Interacts with CHEK1, ATR and ATRIP. Interacts with CLSPN. Interacts (via N-terminus) with TIPIN. The TIMELESS-TIPIN heterodimer binds preferably to guanine-rich quadruplex-forming (G4) DNA structures. Associates with the MCM2-7 complex. Interacts with DNA polymerases alpha, delta and epsilon. Interacts with DDX11; this interaction increases recruitment of both proteins onto chromatin in response to replication stress induction by hydroxyurea. Interacts with PARP1; interaction is direct and independent of poly-ADP-ribose. Predominantly and robustly expressed in proliferative organs (spleen, thymus, intestine and testis) compared to those more differentiated such as kidney and liver (at protein level). Expressed in all tissues examined including brain, heart, lung, liver, skeletal muscle, kidney, placenta, pancreas, spleen, thymus and testis. Strongly expressed in the suprachiasmatic nucleus (SCN) and pars tuberalis, moderately in the cingulate cortex, pyrimidal cell layer of the piriform cortex, periventricular part of the caudate putamen, and granular layer of the cerebellum, and weakly in the cerebral cortex, gyrus dentatus, hippocampus and thalamic nuclei. In embryonic kidney, expression is highest in regions of active ureteric bud cell branching.

It localises to the nucleus. It is found in the chromosome. In terms of biological role, plays an important role in the control of DNA replication, maintenance of replication fork stability, maintenance of genome stability throughout normal DNA replication, DNA repair and in the regulation of the circadian clock. Required to stabilize replication forks during DNA replication by forming a complex with TIPIN: this complex regulates DNA replication processes under both normal and stress conditions, stabilizes replication forks and influences both CHEK1 phosphorylation and the intra-S phase checkpoint in response to genotoxic stress. During DNA replication, inhibits the CMG complex ATPase activity and activates DNA polymerases catalytic activities, coupling DNA unwinding and DNA synthesis. TIMELESS promotes TIPIN nuclear localization. Plays a role in maintaining processive DNA replication past genomic guanine-rich DNA sequences that form G-quadruplex (G4) structures, possibly together with DDX1. Involved in cell survival after DNA damage or replication stress by promoting DNA repair. In response to double-strand breaks (DSBs), accumulates at DNA damage sites and promotes homologous recombination repair via its interaction with PARP1. May be specifically required for the ATR-CHEK1 pathway in the replication checkpoint induced by hydroxyurea or ultraviolet light. Involved in the determination of period length and in the DNA damage-dependent phase advancing of the circadian clock. Negatively regulates CLOCK|NPAS2-ARTNL/BMAL1|ARTNL2/BMAL2-induced transactivation of PER1 possibly via translocation of PER1 into the nucleus. May also play an important role in epithelial cell morphogenesis and formation of branching tubules. The chain is Protein timeless homolog from Mus musculus (Mouse).